The chain runs to 231 residues: LexA repressor (231 aa).

The H-T-H motif DNA-binding region spans 26–46 (FDEMKLALDLRSKSGIHRLIT). Residues 79 to 98 (VGFQPRVIDGDRPDRPRPAN) form a disordered region. A compositionally biased stretch (basic and acidic residues) spans 86 to 95 (IDGDRPDRPR). Active-site for autocatalytic cleavage activity residues include Ser152 and Lys190.

This sequence belongs to the peptidase S24 family. Homodimer.

It carries out the reaction Hydrolysis of Ala-|-Gly bond in repressor LexA.. Represses a number of genes involved in the response to DNA damage (SOS response), including recA and lexA. In the presence of single-stranded DNA, RecA interacts with LexA causing an autocatalytic cleavage which disrupts the DNA-binding part of LexA, leading to derepression of the SOS regulon and eventually DNA repair. The sequence is that of LexA repressor from Ruegeria pomeroyi (strain ATCC 700808 / DSM 15171 / DSS-3) (Silicibacter pomeroyi).